We begin with the raw amino-acid sequence, 169 residues long: Large ribosomal subunit protein uL5 (169 aa).

The protein belongs to the universal ribosomal protein uL5 family. Part of the 50S ribosomal subunit; contacts the 5S rRNA and probably tRNA. Forms a bridge to the 30S subunit in the 70S ribosome.

In terms of biological role, this is one of the proteins that bind and probably mediate the attachment of the 5S RNA into the large ribosomal subunit, where it forms part of the central protuberance. In the 70S ribosome it contacts protein S13 of the 30S subunit (bridge B1b), connecting the 2 subunits; this bridge is implicated in subunit movement. May contact the P site tRNA; the 5S rRNA and some of its associated proteins might help stabilize positioning of ribosome-bound tRNAs. This chain is Large ribosomal subunit protein uL5, found in Methanosarcina barkeri (strain Fusaro / DSM 804).